A 185-amino-acid polypeptide reads, in one-letter code: Elongation factor P (185 aa).

This sequence belongs to the elongation factor P family.

The protein localises to the cytoplasm. The protein operates within protein biosynthesis; polypeptide chain elongation. In terms of biological role, involved in peptide bond synthesis. Stimulates efficient translation and peptide-bond synthesis on native or reconstituted 70S ribosomes in vitro. Probably functions indirectly by altering the affinity of the ribosome for aminoacyl-tRNA, thus increasing their reactivity as acceptors for peptidyl transferase. This chain is Elongation factor P, found in Symbiobacterium thermophilum (strain DSM 24528 / JCM 14929 / IAM 14863 / T).